The sequence spans 200 residues: ATP-dependent Clp protease proteolytic subunit 1 (200 aa).

The Nucleophile role is filled by Ser98. Residue His123 is part of the active site.

It belongs to the peptidase S14 family. As to quaternary structure, fourteen ClpP subunits assemble into 2 heptameric rings which stack back to back to give a disk-like structure with a central cavity, resembling the structure of eukaryotic proteasomes.

Its subcellular location is the cytoplasm. The enzyme catalyses Hydrolysis of proteins to small peptides in the presence of ATP and magnesium. alpha-casein is the usual test substrate. In the absence of ATP, only oligopeptides shorter than five residues are hydrolyzed (such as succinyl-Leu-Tyr-|-NHMec, and Leu-Tyr-Leu-|-Tyr-Trp, in which cleavage of the -Tyr-|-Leu- and -Tyr-|-Trp bonds also occurs).. In terms of biological role, cleaves peptides in various proteins in a process that requires ATP hydrolysis. Has a chymotrypsin-like activity. Plays a major role in the degradation of misfolded proteins. The protein is ATP-dependent Clp protease proteolytic subunit 1 of Mycobacterium leprae (strain TN).